Reading from the N-terminus, the 468-residue chain is Serine/threonine-protein phosphatase 2A 55 kDa regulatory subunit B beta isoform (468 aa).

7 WD repeats span residues 47 to 86 (SSAD…KNQP), 112 to 153 (EIEE…KRPE), 196 to 234 (AHTY…RSFN), 245 to 285 (ELTE…LCDK), 304 to 342 (EIIS…RPIE), 359 to 400 (ENDC…DVTL), and 435 to 468 (DFSK…DKVN).

It belongs to the phosphatase 2A regulatory subunit B family. PP2A consists of a common heterodimeric core enzyme, composed of a 36 kDa catalytic subunit (subunit C) and a 65 kDa constant regulatory subunit (PR65 or subunit A), that associates with a variety of regulatory subunits.

The protein resides in the cytoplasm. Its subcellular location is the cytoskeleton. It localises to the membrane. In terms of biological role, the B regulatory subunit might modulate substrate selectivity and catalytic activity, and might also direct the localization of the catalytic enzyme to a particular subcellular compartment. Negatively controls the initiation of oocyte maturation. The chain is Serine/threonine-protein phosphatase 2A 55 kDa regulatory subunit B beta isoform (ppp2r2b) from Xenopus laevis (African clawed frog).